The following is a 1115-amino-acid chain: Ubiquitin C-terminal hydrolase 13 (1115 aa).

Positions 1–51 (MTMMTPPPLDQQEDEEMLVPNPDLVEGPQPMEVAQTDPAATAVENPPPEDP) are disordered. One can recognise an MATH domain in the interval 53-178 (SLKFTWTIPM…NDTVLIEAEV (126 aa)). The USP domain occupies 198 to 522 (VGLKNQGATC…NAYMLVYIRE (325 aa)). Cys207 (nucleophile) is an active-site residue. The active-site Proton acceptor is His454.

Belongs to the peptidase C19 family. As to quaternary structure, interacts with SIC/RON3. Interacts with RGI1 and RGI2.

It catalyses the reaction Thiol-dependent hydrolysis of ester, thioester, amide, peptide and isopeptide bonds formed by the C-terminal Gly of ubiquitin (a 76-residue protein attached to proteins as an intracellular targeting signal).. Functionally, recognizes and hydrolyzes the peptide bond at the C-terminal Gly of ubiquitin. Involved in the processing of poly-ubiquitin precursors as well as that of ubiquitinated proteins. Positive regulator of root meristem development that, together with UBP12, prevents the ubiquitination and turnover of RGFR1 induced by the RGF1 hormone peptide, thus influencing PLT1 and PLT2 expression. The polypeptide is Ubiquitin C-terminal hydrolase 13 (Arabidopsis thaliana (Mouse-ear cress)).